The following is a 116-amino-acid chain: MAGFGLPNFGQLTEAFKKAKEIQQNAQKLQDELESMEIEGKSDDEMIKVWISGNQLPLRVEVNENISTANKEEIEKNILEAIKKAHESSTTTMKERMNDLTGGLNLNLPGLDNNDS.

Positions 87-98 (ESSTTTMKERMN) are enriched in basic and acidic residues. A disordered region spans residues 87 to 116 (ESSTTTMKERMNDLTGGLNLNLPGLDNNDS). A compositionally biased stretch (low complexity) spans 99–116 (DLTGGLNLNLPGLDNNDS).

Belongs to the YbaB/EbfC family. As to quaternary structure, homodimer.

It is found in the cytoplasm. The protein resides in the nucleoid. Binds to DNA and alters its conformation. May be involved in regulation of gene expression, nucleoid organization and DNA protection. This is Nucleoid-associated protein PMM0020 from Prochlorococcus marinus subsp. pastoris (strain CCMP1986 / NIES-2087 / MED4).